A 222-amino-acid polypeptide reads, in one-letter code: Gamma-glutamylcyclotransferase and putative RNase MJ0434 (222 aa).

R75 is a catalytic residue. An RX(4)HXY motif motif is present at residues 75–82; that stretch reads RDILIRKY. Y82 is subject to O-di-AMP-tyrosine.

This sequence in the N-terminal section; belongs to the HepT RNase toxin family. The protein in the C-terminal section; belongs to the gamma-glutamylcyclotransferase family. In terms of assembly, homodimer, probably forms a complex with cognate antitoxin MJ0435. Post-translationally, modified by cognate antitoxin MJ0435; probably at least 2 successive AMPylation events occur on Tyr-82.

In terms of biological role, probable toxic component of a putative type VII toxin-antitoxin (TA) system, probably an RNase. Probably neutralized by cognate antitoxin MJ0435. Neutralization may be due to AMPylation by MJ0435. The protein is Gamma-glutamylcyclotransferase and putative RNase MJ0434 of Methanocaldococcus jannaschii (strain ATCC 43067 / DSM 2661 / JAL-1 / JCM 10045 / NBRC 100440) (Methanococcus jannaschii).